The primary structure comprises 333 residues: Beta-ketoacyl-[acyl-carrier-protein] synthase III (333 aa).

Residues Cys-116 and His-258 contribute to the active site. Positions 259-263 (QANQR) are ACP-binding. Asn-288 is an active-site residue.

It belongs to the thiolase-like superfamily. FabH family. As to quaternary structure, homodimer.

It is found in the cytoplasm. The enzyme catalyses malonyl-[ACP] + acetyl-CoA + H(+) = 3-oxobutanoyl-[ACP] + CO2 + CoA. It functions in the pathway lipid metabolism; fatty acid biosynthesis. Catalyzes the condensation reaction of fatty acid synthesis by the addition to an acyl acceptor of two carbons from malonyl-ACP. Catalyzes the first condensation reaction which initiates fatty acid synthesis and may therefore play a role in governing the total rate of fatty acid production. Possesses both acetoacetyl-ACP synthase and acetyl transacylase activities. Its substrate specificity determines the biosynthesis of branched-chain and/or straight-chain of fatty acids. This is Beta-ketoacyl-[acyl-carrier-protein] synthase III from Microcystis aeruginosa (strain NIES-843 / IAM M-2473).